The chain runs to 109 residues: Probable endoribonuclease MazF5 (109 aa).

The protein belongs to the PemK/MazF family. In terms of assembly, forms a complex with cognate antitoxin MazE5.

Toxic component of a type II toxin-antitoxin (TA) system. Upon expression in M.smegmatis inhibits colony formation. Its toxic effect is neutralized by coexpression with cognate antitoxin MazE5. Probably an endoribonuclease. The protein is Probable endoribonuclease MazF5 (mazF5) of Mycobacterium tuberculosis (strain ATCC 25618 / H37Rv).